Consider the following 291-residue polypeptide: GCN5-related N-acetyltransferase 4, chloroplastic (291 aa).

The N-terminal 61 residues, M1–N61, are a transit peptide targeting the chloroplast. The region spanning I76–N280 is the N-acetyltransferase domain. Acetyl-CoA contacts are provided by residues V199–V201 and R207–K212. An N6-acetyllysine modification is found at K217. Residues N238–G240 and Y245 each bind acetyl-CoA. Y245 functions as the Proton donor in the catalytic mechanism. 2 positions are modified to N6-acetyllysine: K254 and K265.

It belongs to the acetyltransferase family. GNAT subfamily. Oligomer. Post-translationally, autoacetylated at K-217, K-254 and K-265. Expressed in green tissues.

The protein resides in the plastid. It is found in the chloroplast. It carries out the reaction an N-terminal L-alpha-aminoacyl-[protein] + acetyl-CoA = N-terminal N(alpha)-acetyl-L-alpha-aminoacyl-[protein] + CoA + H(+). The enzyme catalyses L-lysyl-[protein] + acetyl-CoA = N(6)-acetyl-L-lysyl-[protein] + CoA + H(+). The catalysed reaction is N-terminal L-alanyl-[protein] + acetyl-CoA = N-terminal N(alpha)-acetyl-L-alanyl-[protein] + CoA + H(+). It catalyses the reaction N-terminal L-seryl-[protein] + acetyl-CoA = N-terminal N(alpha)-acetyl-L-seryl-[protein] + CoA + H(+). It carries out the reaction N-terminal L-threonyl-[protein] + acetyl-CoA = N-terminal N(alpha)-acetyl-L-threonyl-[protein] + CoA + H(+). The enzyme catalyses N-terminal L-methionyl-[protein] + acetyl-CoA = N-terminal N(alpha)-acetyl-L-methionyl-[protein] + CoA + H(+). The catalysed reaction is N-terminal L-valyl-[protein] + acetyl-CoA = N-terminal N(alpha)-acetyl-L-valyl-[protein] + CoA + H(+). It catalyses the reaction N-terminal glycyl-[protein] + acetyl-CoA = N-terminal N(alpha)-acetylglycyl-[protein] + CoA + H(+). In terms of biological role, protein acetyltransferase with dual specificity triggering both N-alpha-acetylation (NTA), with a large spectrum of modified N-termini, including methionine, alanine, serine, threonine and to a lower extent glycine and valine as substrates, and epsilon-lysine acetylation (KA) of several plastid proteins. This is GCN5-related N-acetyltransferase 4, chloroplastic from Arabidopsis thaliana (Mouse-ear cress).